The following is a 210-amino-acid chain: Uracil phosphoribosyltransferase (210 aa).

5-phospho-alpha-D-ribose 1-diphosphate contacts are provided by residues Arg78, Arg103, and Asp130–Thr138. Residues Ile193 and Gly198–Ala200 contribute to the uracil site. Asp199 lines the 5-phospho-alpha-D-ribose 1-diphosphate pocket.

Belongs to the UPRTase family. The cofactor is Mg(2+).

It carries out the reaction UMP + diphosphate = 5-phospho-alpha-D-ribose 1-diphosphate + uracil. It functions in the pathway pyrimidine metabolism; UMP biosynthesis via salvage pathway; UMP from uracil: step 1/1. With respect to regulation, allosterically activated by GTP. Catalyzes the conversion of uracil and 5-phospho-alpha-D-ribose 1-diphosphate (PRPP) to UMP and diphosphate. In Stenotrophomonas maltophilia (strain R551-3), this protein is Uracil phosphoribosyltransferase.